A 490-amino-acid chain; its full sequence is MPRFSDQLLYIGGRYVPARGGHTFEVVNPATGEVLANVHNAGADDLDAAVDSAQAGQRQWAALTTVERSRILLRAVALLRERNDALAELETLNTGKPLSETRSVDVVTGADVLEYYAGVAQALQGAQVPLREGSFFYTRHEPLGVVGAIGAWNYPIQIALWKAAPALAAGNAMIFKPSEVTPLTALKLAEIFTEAGLPDGVFNVLPGDGASVGTALTEHPQIEKISFTGGTATGRKVMASASSSSLKEVTMELGGKSPLIVCADADLDLAADIAMMANFYSSGQVCTNGTRVFVPRALRHAFEARLLARVQRIHIGDPLDERTTFGPLVSAAHMQRVLEHIEQGKAEGARLLCGGERLQDGALAQGYYVAPTIFSDCTDVMTIVREEIFGPVLSLLTYDDEDEAVTRANATTYGLAAGVVTPDLARAHRLIHRLEAGICWVNTWGESPAPMPVGGYKQSGVGRENGLATLQAYTRTKSVQIELERYASVF.

K(+) is bound at residue asparagine 93. 150 to 152 lines the NAD(+) pocket; the sequence is GAW. Catalysis depends on lysine 162, which acts as the Charge relay system. 176 to 179 is an NAD(+) binding site; sequence KPSE. Valine 180 lines the K(+) pocket. An NAD(+)-binding site is contributed by 230–233; sequence GTAT. Leucine 246 is a K(+) binding site. Catalysis depends on glutamate 252, which acts as the Proton acceptor. The NAD(+) site is built by glycine 254, cysteine 286, and glutamate 387. Catalysis depends on cysteine 286, which acts as the Nucleophile. Cysteine sulfenic acid (-SOH) is present on cysteine 286. Residues lysine 457 and glycine 460 each coordinate K(+). The active-site Charge relay system is the glutamate 464.

Belongs to the aldehyde dehydrogenase family. Dimer of dimers. The cofactor is K(+).

The enzyme catalyses betaine aldehyde + NAD(+) + H2O = glycine betaine + NADH + 2 H(+). Its pathway is amine and polyamine biosynthesis; betaine biosynthesis via choline pathway; betaine from betaine aldehyde: step 1/1. Involved in the biosynthesis of the osmoprotectant glycine betaine. Catalyzes the irreversible oxidation of betaine aldehyde to the corresponding acid. The chain is Betaine aldehyde dehydrogenase from Xanthomonas euvesicatoria pv. vesicatoria (strain 85-10) (Xanthomonas campestris pv. vesicatoria).